The primary structure comprises 406 residues: Tryptophan synthase beta chain (406 aa).

An N6-(pyridoxal phosphate)lysine modification is found at K99.

The protein belongs to the TrpB family. Tetramer of two alpha and two beta chains. Pyridoxal 5'-phosphate is required as a cofactor.

The enzyme catalyses (1S,2R)-1-C-(indol-3-yl)glycerol 3-phosphate + L-serine = D-glyceraldehyde 3-phosphate + L-tryptophan + H2O. Its pathway is amino-acid biosynthesis; L-tryptophan biosynthesis; L-tryptophan from chorismate: step 5/5. Its function is as follows. The beta subunit is responsible for the synthesis of L-tryptophan from indole and L-serine. This is Tryptophan synthase beta chain from Rhizobium leguminosarum bv. trifolii (strain WSM2304).